Consider the following 61-residue polypeptide: Small ribosomal subunit protein uS14 (61 aa).

Residues Cys24, Cys27, Cys40, and Cys43 each contribute to the Zn(2+) site.

It belongs to the universal ribosomal protein uS14 family. Zinc-binding uS14 subfamily. In terms of assembly, part of the 30S ribosomal subunit. Contacts proteins S3 and S10. The cofactor is Zn(2+).

Its function is as follows. Binds 16S rRNA, required for the assembly of 30S particles and may also be responsible for determining the conformation of the 16S rRNA at the A site. This Nitratiruptor sp. (strain SB155-2) protein is Small ribosomal subunit protein uS14.